Here is a 294-residue protein sequence, read N- to C-terminus: Small ribosomal subunit protein uS2 (294 aa).

A compositionally biased stretch (basic and acidic residues) spans 256-274 (SGKFIMDEDPDSKKTKTAE). The interval 256-294 (SGKFIMDEDPDSKKTKTAEEPSATIEPSTTTTVEVDQNE) is disordered. Over residues 280–294 (IEPSTTTTVEVDQNE) the composition is skewed to polar residues.

It belongs to the universal ribosomal protein uS2 family.

The protein is Small ribosomal subunit protein uS2 of Leptospira interrogans serogroup Icterohaemorrhagiae serovar Lai (strain 56601).